A 117-amino-acid chain; its full sequence is Small ribosomal subunit protein bS6 (117 aa).

This sequence belongs to the bacterial ribosomal protein bS6 family.

In terms of biological role, binds together with bS18 to 16S ribosomal RNA. The protein is Small ribosomal subunit protein bS6 of Porphyromonas gingivalis (strain ATCC BAA-308 / W83).